The chain runs to 397 residues: Ribosomal RNA processing protein 1 homolog (397 aa).

The segment covering 334-343 (EAAEAARQEN) has biased composition (basic and acidic residues). Positions 334 to 366 (EAAEAARQENGDDVPDDEIAEVKKGNGKKTAVP) are disordered.

It belongs to the RRP1 family.

It localises to the nucleus. May be involved in the generation of 28S rRNA. The polypeptide is Ribosomal RNA processing protein 1 homolog (Caenorhabditis elegans).